The chain runs to 30 residues: Photosystem II reaction center protein Psb30 (30 aa).

At 1–6 the chain is on the lumenal side; the sequence is EVIAQL. The helical transmembrane segment at 7-21 threads the bilayer; it reads TMIAMIGIAGPMIIF. The Cytoplasmic segment spans residues 22–30; it reads LLAVRRGNL.

The protein belongs to the Psb30/Ycf12 family. In terms of assembly, PSII is composed of 1 copy each of membrane proteins PsbA, PsbB, PsbC, PsbD, PsbE, PsbF, PsbH, PsbI, PsbJ, PsbK, PsbL, PsbM, PsbT, PsbX, PsbY, PsbZ, Psb30/Ycf12, peripheral proteins PsbO, CyanoQ (PsbQ), PsbU, PsbV and a large number of cofactors. It forms dimeric complexes. The cofactor is PSII binds multiple chlorophylls, carotenoids and specific lipids..

Its subcellular location is the cellular thylakoid membrane. Functionally, a core subunit of photosystem II (PSII), probably helps stabilize the reaction center. PSII is a light-driven water plastoquinone oxidoreductase, using light energy to abstract electrons from H(2)O, generating a proton gradient subsequently used for ATP formation. The chain is Photosystem II reaction center protein Psb30 from Thermostichus vulcanus (Synechococcus vulcanus).